We begin with the raw amino-acid sequence, 376 residues long: N-acetyldiaminopimelate deacetylase (376 aa).

Residue D69 is part of the active site. E128 functions as the Proton acceptor in the catalytic mechanism.

This sequence belongs to the peptidase M20A family. N-acetyldiaminopimelate deacetylase subfamily.

It catalyses the reaction N-acetyl-(2S,6S)-2,6-diaminopimelate + H2O = (2S,6S)-2,6-diaminopimelate + acetate. It participates in amino-acid biosynthesis; L-lysine biosynthesis via DAP pathway; LL-2,6-diaminopimelate from (S)-tetrahydrodipicolinate (acetylase route): step 3/3. Its function is as follows. Catalyzes the conversion of N-acetyl-diaminopimelate to diaminopimelate and acetate. The protein is N-acetyldiaminopimelate deacetylase of Bacillus cytotoxicus (strain DSM 22905 / CIP 110041 / 391-98 / NVH 391-98).